The primary structure comprises 347 residues: NADH-ubiquinone oxidoreductase chain 2 (347 aa).

The next 10 membrane-spanning stretches (helical) occupy residues 13–33 (VILG…WIGF), 59–79 (YFFT…LNLM), 96–116 (MIMT…FWVP), 122–142 (IPLS…LTVL), 149–169 (INLT…GWGG), 178–198 (IMAY…IYNP), 200–220 (MTLL…MLFM), 240–260 (IVTI…LTGF), 276–296 (IILP…YMRL), and 325–345 (LLTP…MIII).

The protein belongs to the complex I subunit 2 family. As to quaternary structure, core subunit of respiratory chain NADH dehydrogenase (Complex I) which is composed of 45 different subunits. Interacts with TMEM242.

It localises to the mitochondrion inner membrane. It carries out the reaction a ubiquinone + NADH + 5 H(+)(in) = a ubiquinol + NAD(+) + 4 H(+)(out). Its function is as follows. Core subunit of the mitochondrial membrane respiratory chain NADH dehydrogenase (Complex I) which catalyzes electron transfer from NADH through the respiratory chain, using ubiquinone as an electron acceptor. Essential for the catalytic activity and assembly of complex I. The chain is NADH-ubiquinone oxidoreductase chain 2 from Molossus ater (Black mastiff bat).